The following is a 61-amino-acid chain: Small ribosomal subunit protein uS14 (61 aa).

Zn(2+) contacts are provided by Cys24, Cys27, Cys40, and Cys43.

It belongs to the universal ribosomal protein uS14 family. Zinc-binding uS14 subfamily. Part of the 30S ribosomal subunit. Contacts proteins S3 and S10. It depends on Zn(2+) as a cofactor.

In terms of biological role, binds 16S rRNA, required for the assembly of 30S particles and may also be responsible for determining the conformation of the 16S rRNA at the A site. This is Small ribosomal subunit protein uS14 from Coprothermobacter proteolyticus (strain ATCC 35245 / DSM 5265 / OCM 4 / BT).